The sequence spans 556 residues: 2-succinyl-5-enolpyruvyl-6-hydroxy-3-cyclohexene-1-carboxylate synthase (556 aa).

Belongs to the TPP enzyme family. MenD subfamily. In terms of assembly, homodimer. Requires Mg(2+) as cofactor. Mn(2+) serves as cofactor. The cofactor is thiamine diphosphate.

The enzyme catalyses isochorismate + 2-oxoglutarate + H(+) = 5-enolpyruvoyl-6-hydroxy-2-succinyl-cyclohex-3-ene-1-carboxylate + CO2. The protein operates within quinol/quinone metabolism; 1,4-dihydroxy-2-naphthoate biosynthesis; 1,4-dihydroxy-2-naphthoate from chorismate: step 2/7. Its pathway is quinol/quinone metabolism; menaquinone biosynthesis. Functionally, catalyzes the thiamine diphosphate-dependent decarboxylation of 2-oxoglutarate and the subsequent addition of the resulting succinic semialdehyde-thiamine pyrophosphate anion to isochorismate to yield 2-succinyl-5-enolpyruvyl-6-hydroxy-3-cyclohexene-1-carboxylate (SEPHCHC). This chain is 2-succinyl-5-enolpyruvyl-6-hydroxy-3-cyclohexene-1-carboxylate synthase, found in Escherichia coli (strain SMS-3-5 / SECEC).